The sequence spans 122 residues: Large ribosomal subunit protein uL14 (122 aa).

This sequence belongs to the universal ribosomal protein uL14 family. In terms of assembly, part of the 50S ribosomal subunit. Forms a cluster with proteins L3 and L19. In the 70S ribosome, L14 and L19 interact and together make contacts with the 16S rRNA in bridges B5 and B8.

Binds to 23S rRNA. Forms part of two intersubunit bridges in the 70S ribosome. The protein is Large ribosomal subunit protein uL14 of Pseudomonas fluorescens (strain ATCC BAA-477 / NRRL B-23932 / Pf-5).